The primary structure comprises 904 residues: Protein translocase subunit SecA (904 aa).

ATP is bound by residues glutamine 87, 105 to 109, and aspartate 512; that span reads GEGKT. A disordered region spans residues 851–904; that stretch reads LAKQQQLSHESDNSALMSQEEANVAASLERKVGRNDPCPCGSGKKYKQCHGRLQ. The segment covering 853 to 871 has biased composition (polar residues); that stretch reads KQQQLSHESDNSALMSQEE. The Zn(2+) site is built by cysteine 888, cysteine 890, cysteine 899, and histidine 900. Residues 894 to 904 are compositionally biased toward basic residues; that stretch reads KKYKQCHGRLQ.

The protein belongs to the SecA family. As to quaternary structure, monomer and homodimer. Part of the essential Sec protein translocation apparatus which comprises SecA, SecYEG and auxiliary proteins SecDF-YajC and YidC. Zn(2+) is required as a cofactor.

Its subcellular location is the cell inner membrane. The protein resides in the cytoplasm. The enzyme catalyses ATP + H2O + cellular proteinSide 1 = ADP + phosphate + cellular proteinSide 2.. Functionally, part of the Sec protein translocase complex. Interacts with the SecYEG preprotein conducting channel. Has a central role in coupling the hydrolysis of ATP to the transfer of proteins into and across the cell membrane, serving both as a receptor for the preprotein-SecB complex and as an ATP-driven molecular motor driving the stepwise translocation of polypeptide chains across the membrane. The chain is Protein translocase subunit SecA from Yersinia enterocolitica serotype O:8 / biotype 1B (strain NCTC 13174 / 8081).